The sequence spans 776 residues: Isoamylase (776 aa).

Residues 1–26 form the signal peptide; the sequence is MKCPKILAALLGCAVLAGVPAMPAHA. Ca(2+) contacts are provided by Asp-154, Glu-255, Thr-256, Asn-258, and Asp-285. Asp-401 functions as the Nucleophile in the catalytic mechanism. A disulfide bridge links Cys-410 with Cys-422. Glu-461 serves as the catalytic Proton donor. Disulfide bonds link Cys-546–Cys-616 and Cys-738–Cys-766.

The protein belongs to the glycosyl hydrolase 13 family. Monomer. Requires Ca(2+) as cofactor.

It is found in the secreted. It catalyses the reaction Hydrolysis of (1-&gt;6)-alpha-D-glucosidic branch linkages in glycogen, amylopectin and their beta-limit dextrins.. The polypeptide is Isoamylase (iam) (Pseudomonas amyloderamosa).